The primary structure comprises 487 residues: UDP-N-acetylmuramate--L-alanine ligase (487 aa).

ATP is bound at residue 129–135; sequence GTHGKTT.

The protein belongs to the MurCDEF family.

It is found in the cytoplasm. The catalysed reaction is UDP-N-acetyl-alpha-D-muramate + L-alanine + ATP = UDP-N-acetyl-alpha-D-muramoyl-L-alanine + ADP + phosphate + H(+). The protein operates within cell wall biogenesis; peptidoglycan biosynthesis. In terms of biological role, cell wall formation. The protein is UDP-N-acetylmuramate--L-alanine ligase of Aliivibrio salmonicida (strain LFI1238) (Vibrio salmonicida (strain LFI1238)).